The primary structure comprises 489 residues: NADH-quinone oxidoreductase subunit N (489 aa).

The next 14 helical transmembrane spans lie at 8 to 28 (LIAM…MLSI), 35 to 55 (FTIA…LYYV), 75 to 95 (FFTA…YPWL), 105 to 125 (FYML…AHHL), 127 to 147 (SMFI…GYAF), 159 to 179 (YMLL…LLYA), 203 to 223 (VLAG…LFPF), 235 to 255 (PAPT…AVVM), 271 to 291 (MILG…ALTQ), 303 to 323 (VSHL…PILA), 329 to 349 (IYLA…AVAS), 374 to 394 (AVVM…LGFI), 407 to 427 (SLWW…FYYL), and 456 to 476 (LITL…QPLI).

Belongs to the complex I subunit 2 family. NDH-1 is composed of 13 different subunits. Subunits NuoA, H, J, K, L, M, N constitute the membrane sector of the complex.

It localises to the cell inner membrane. It catalyses the reaction a quinone + NADH + 5 H(+)(in) = a quinol + NAD(+) + 4 H(+)(out). Its function is as follows. NDH-1 shuttles electrons from NADH, via FMN and iron-sulfur (Fe-S) centers, to quinones in the respiratory chain. The immediate electron acceptor for the enzyme in this species is believed to be ubiquinone. Couples the redox reaction to proton translocation (for every two electrons transferred, four hydrogen ions are translocated across the cytoplasmic membrane), and thus conserves the redox energy in a proton gradient. The polypeptide is NADH-quinone oxidoreductase subunit N (Proteus mirabilis (strain HI4320)).